The primary structure comprises 29 residues: Potassium channel toxin alpha-KTx 8.3 (29 aa).

Disulfide bonds link cysteine 3–cysteine 19, cysteine 6–cysteine 24, and cysteine 10–cysteine 26.

The protein belongs to the short scorpion toxin superfamily. Potassium channel inhibitor family. Alpha-KTx 08 subfamily. Expressed by the venom gland.

Its subcellular location is the secreted. Functionally, specific and potent inhibitor of ClC-2/CLCN2 chloride channel. It slows ClC-2/CLCN2 activation by increasing the latency to first opening by nearly 8-fold but is unable to inhibit open channels, suggesting that this toxin inhibits channel activation gating. The sequence is that of Potassium channel toxin alpha-KTx 8.3 from Leiurus hebraeus (Hebrew deathstalker scorpion).